A 74-amino-acid chain; its full sequence is uncharacterized protein (74 aa).

Residues 15–32 (FLHALTVTFLSDIFVWLV) form a helical membrane-spanning segment.

The protein resides in the membrane. This is an uncharacterized protein from Saccharomyces cerevisiae (strain ATCC 204508 / S288c) (Baker's yeast).